The primary structure comprises 368 residues: RING finger protein 32 (368 aa).

A disordered region spans residues 45-82; sequence RKKEKKSKSLKRDATAIIDTGLRKSTEGPNMEDPEKEY. Residues 129–171 form an RING-type 1; atypical zinc finger; that stretch reads CPICKEEFELHPQVLLSCSHVFHRACLQAFEKFTNKKTCPLCR. Residues 188 to 217 form the IQ domain; that stretch reads RVKCATRIQAYWRGYIVRKWYRNLRKIIPP. The segment at 295–358 adopts an RING-type 2; atypical zinc-finger fold; sequence CSICLTPLSF…APFHVCPLCR (64 aa).

It localises to the cytoplasm. Functionally, may play a role in sperm formation. The chain is RING finger protein 32 (Rnf32) from Mus musculus (Mouse).